Reading from the N-terminus, the 468-residue chain is Probable ubiquitin carboxyl-terminal hydrolase R319 (468 aa).

Residues 42–462 (TGIMNLGNTC…NAYILFYIRS (421 aa)) enclose the USP domain. The active-site Nucleophile is the Cys-51. His-420 functions as the Proton acceptor in the catalytic mechanism.

This sequence belongs to the peptidase C19 family.

It catalyses the reaction Thiol-dependent hydrolysis of ester, thioester, amide, peptide and isopeptide bonds formed by the C-terminal Gly of ubiquitin (a 76-residue protein attached to proteins as an intracellular targeting signal).. This chain is Probable ubiquitin carboxyl-terminal hydrolase R319, found in Acanthamoeba polyphaga (Amoeba).